Here is a 220-residue protein sequence, read N- to C-terminus: Uracil-DNA glycosylase 1 (220 aa).

D65 acts as the Proton acceptor in catalysis.

It belongs to the uracil-DNA glycosylase (UDG) superfamily. UNG family.

It is found in the cytoplasm. The catalysed reaction is Hydrolyzes single-stranded DNA or mismatched double-stranded DNA and polynucleotides, releasing free uracil.. Functionally, excises uracil residues from the DNA which can arise as a result of misincorporation of dUMP residues by DNA polymerase or due to deamination of cytosine. The polypeptide is Uracil-DNA glycosylase 1 (Bacteroides fragilis (strain YCH46)).